Here is a 308-residue protein sequence, read N- to C-terminus: Glutathione synthetase (308 aa).

The region spanning 120–304 is the ATP-grasp domain; sequence KLGALRFNNL…LADQVIARLL (185 aa). Position 146–202 (146–202) interacts with ATP; that stretch reads AREQEEVVLKPLGGRAGQGLVRVAGAAPGLEALLELVTDQEQLPVMVQRFLPAVIEG. Residues E275 and N277 each contribute to the Mg(2+) site.

Belongs to the prokaryotic GSH synthase family. Requires Mg(2+) as cofactor. Mn(2+) serves as cofactor.

It catalyses the reaction gamma-L-glutamyl-L-cysteine + glycine + ATP = glutathione + ADP + phosphate + H(+). Its pathway is sulfur metabolism; glutathione biosynthesis; glutathione from L-cysteine and L-glutamate: step 2/2. This chain is Glutathione synthetase, found in Prochlorococcus marinus (strain MIT 9313).